Consider the following 329-residue polypeptide: GTP 3',8-cyclase (329 aa).

Positions 8–234 constitute a Radical SAM core domain; that stretch reads AFARKFYYLR…QLRQRSDGPA (227 aa). R17 is a binding site for GTP. C24 and C28 together coordinate [4Fe-4S] cluster. Y30 contributes to the S-adenosyl-L-methionine binding site. C31 contacts [4Fe-4S] cluster. Residue R68 coordinates GTP. G72 contributes to the S-adenosyl-L-methionine binding site. T99 lines the GTP pocket. S123 is a binding site for S-adenosyl-L-methionine. Residue K160 participates in GTP binding. M194 lines the S-adenosyl-L-methionine pocket. C257 and C260 together coordinate [4Fe-4S] cluster. A GTP-binding site is contributed by 262–264; it reads RLR. C274 is a [4Fe-4S] cluster binding site.

The protein belongs to the radical SAM superfamily. MoaA family. Monomer and homodimer. The cofactor is [4Fe-4S] cluster.

It catalyses the reaction GTP + AH2 + S-adenosyl-L-methionine = (8S)-3',8-cyclo-7,8-dihydroguanosine 5'-triphosphate + 5'-deoxyadenosine + L-methionine + A + H(+). It participates in cofactor biosynthesis; molybdopterin biosynthesis. Its function is as follows. Catalyzes the cyclization of GTP to (8S)-3',8-cyclo-7,8-dihydroguanosine 5'-triphosphate. The protein is GTP 3',8-cyclase of Escherichia coli O139:H28 (strain E24377A / ETEC).